Reading from the N-terminus, the 371-residue chain is UDP-N-acetylglucosamine--N-acetylmuramyl-(pentapeptide) pyrophosphoryl-undecaprenol N-acetylglucosamine transferase (371 aa).

UDP-N-acetyl-alpha-D-glucosamine contacts are provided by residues threonine 15–glycine 17, asparagine 126, arginine 172, serine 199, isoleucine 256, alanine 275–glutamate 280, and glutamine 301.

This sequence belongs to the glycosyltransferase 28 family. MurG subfamily.

The protein resides in the cell inner membrane. It catalyses the reaction di-trans,octa-cis-undecaprenyl diphospho-N-acetyl-alpha-D-muramoyl-L-alanyl-D-glutamyl-meso-2,6-diaminopimeloyl-D-alanyl-D-alanine + UDP-N-acetyl-alpha-D-glucosamine = di-trans,octa-cis-undecaprenyl diphospho-[N-acetyl-alpha-D-glucosaminyl-(1-&gt;4)]-N-acetyl-alpha-D-muramoyl-L-alanyl-D-glutamyl-meso-2,6-diaminopimeloyl-D-alanyl-D-alanine + UDP + H(+). The protein operates within cell wall biogenesis; peptidoglycan biosynthesis. Cell wall formation. Catalyzes the transfer of a GlcNAc subunit on undecaprenyl-pyrophosphoryl-MurNAc-pentapeptide (lipid intermediate I) to form undecaprenyl-pyrophosphoryl-MurNAc-(pentapeptide)GlcNAc (lipid intermediate II). The chain is UDP-N-acetylglucosamine--N-acetylmuramyl-(pentapeptide) pyrophosphoryl-undecaprenol N-acetylglucosamine transferase from Francisella tularensis subsp. holarctica (strain FTNF002-00 / FTA).